The sequence spans 214 residues: MSSLAGFRNLATKIVCVGRNYKDHALELGNAIPKKPMLFVKTVNSFIVEGEPIVAPPGCQNLHQEVELGVVISKKASRISKSDAMDYIGGYTVALDMTARDFQDEAKKAGAPWFLAKSFDGSCPIGGFLPVSDIPNPHDVELFCKINGKDQQRCRTDVMIFDIPTLLEYTTQFFTLEVGDVVLTGTPAGVTKINSGDVIEFGLTDKLNSKFNVQ.

3 residues coordinate Mg(2+): Glu65, Glu67, and Asp96.

It belongs to the FAH family. The cofactor is Mg(2+). Mn(2+) serves as cofactor. As to expression, widely expressed.

The protein resides in the mitochondrion. The enzyme catalyses oxaloacetate = enol-oxaloacetate. In terms of biological role, tautomerase that converts enol-oxaloacetate, a strong inhibitor of succinate dehydrogenase, to the physiological keto form of oxaloacetate. This chain is Oxaloacetate tautomerase fahd-1, mitochondrial, found in Caenorhabditis elegans.